The following is a 146-amino-acid chain: Holo-[acyl-carrier-protein] synthase (146 aa).

Residues D9 and E63 each contribute to the Mg(2+) site.

This sequence belongs to the P-Pant transferase superfamily. AcpS family. Requires Mg(2+) as cofactor.

It is found in the cytoplasm. It carries out the reaction apo-[ACP] + CoA = holo-[ACP] + adenosine 3',5'-bisphosphate + H(+). In terms of biological role, transfers the 4'-phosphopantetheine moiety from coenzyme A to a Ser of acyl-carrier-protein. The chain is Holo-[acyl-carrier-protein] synthase from Burkholderia ambifaria (strain MC40-6).